A 242-amino-acid polypeptide reads, in one-letter code: Protein HTATIP2 (242 aa).

A2 is subject to N-acetylalanine. The segment at A2 to G25 is required for interaction with elongation factor EEF1A1. NADPH-binding residues include S27, G28, E29, T30, R52, R53, L92, G93, Y143, K147, and R178. Y143 serves as the catalytic Proton acceptor. K147 is an active-site residue.

As to quaternary structure, monomer. Forms homodimers during oxidative stress. Interacts (via N-terminus) with elongation factor EEF1A1 (via middle-region); the interaction is direct and competes with EEF1A1 binding to guanyl-nucleotide exchange factor EEF1B2, thereby inhibiting GDP for GTP exchange and reactivation of EEF1A1. Interacts with nuclear transport receptors XPO4, IPO5/RANBP5, IPO7, IPO9 and KPNB1 as well as GCN1L1/GCN1 and LRPPRC probably through their HEAT repeats. Binds NCOA5/CIA.

It localises to the cytoplasm. Its function is as follows. Represses translation by preventing reactivation of elongation factor eEF1A. May also inhibit nuclear import by competing with nuclear import substrates for binding to a subset of nuclear transport receptors. Has additionally been proposed to act as a redox sensor involved in cellular oxidative stress surveillance. This is Protein HTATIP2 (HTATIP2) from Pan paniscus (Pygmy chimpanzee).